The chain runs to 632 residues: MRLSWVIGGAQGTGIDTAANIFGNAVASAGYYIYGNREYYSNIKGGHSYFSLTISDKRVRSNTQKIDILVSFDAETVFQHFYDVKDILIYNKAVETTKIDAVQSMEPELAERIKDFLTKQGYETTVKGALEYASKNNVTLIPVNYDEIAKKVADEMKVPLSVTERVKNIVGITISYKLLGLDVNYLIEAINSTFKQDLYRKMNELAVKDSYDIVESRYNLKPSSKERRRFWLDGNTAVAIGKIYGGVRFQSYYPITPASDESVYIEAHQDVLMEDPITGDKKKGTIVVVQAEDELAAINMAIGAALTGVRAATATSGPGFSLMVEGLGWAGMNEVPVVITYYIRGGPSTGLPTRTAQSDLIFPIFAGHGEFPKIVLASGDHAEAFKDAIWALNLAEKYQTPVIHLVEKTLANSYSTIPYEELELDKLKAERGKIVESGDISYKRFKFTEDGISPRAFLGKATMYYTGDEHNEEGHISEDVVNRTMMYEKRMKKLEVADKEIPEESRVKIYGDLNSRNLIITWGSPTGVLRDILEESNFDFTLLQIRMFSPFPKNLVSKLMEGRDKIITVEGNYLAQTSLLVKMYTGKDVTNSILKWNGRPFLRDELEEALIKVIKDGEKRVVLNGGIYTSME.

The YPITP motif signature appears at 253-257 (YPITP). The substrate site is built by Thr256 and Arg344.

In terms of assembly, heterodimer composed of an alpha and a beta subunit.

The protein localises to the cytoplasm. It carries out the reaction a 2-oxocarboxylate + 2 oxidized [2Fe-2S]-[ferredoxin] + CoA = an acyl-CoA + 2 reduced [2Fe-2S]-[ferredoxin] + CO2 + H(+). In terms of biological role, catalyzes the coenzyme A-dependent oxidative decarboxylation of different 2-oxoacids such as 2-oxoglutarate, pyruvate and 2-oxobutyrate to form their CoA derivatives. This chain is 2-oxoacid:ferredoxin oxidoreductase subunit alpha, found in Sulfolobus sp.